A 417-amino-acid polypeptide reads, in one-letter code: MATLEDGTSEDRVANDEYKIWKKNTPFLYDLVMTHALEWPSLSVQWLPDVAKDNSDHTIHRLILGTHTSDEQNHLLISKICMPTDDAQFDASRYDTERSEYGGFGAVNGKVEPDIRINHEGEVNRARYMPQKSNIIATKSPHADVYIFDYLKHSAVPRDNTFNPLIRLKGHTKEGYGLSWNPNKEGLILSASDDQTVCHWDINANQNVAGELQAKDVFKGHESVVEDVAWHVLHDGVFGSVGDDKKLLIWDVRTSTPGHCIDAHSAEVNCLAFNPYSEFILATGSADKTVALWDLRNLRMKLHSFESHRDEIFQVQWSPHNETILASSGTDKRLHVWDLSKIGEDQSAEDAEDGPPELLFIHGGHTAKISDFSWNPNEPWVVCSVSEDNILQVWQMADNIYNEVDEETPADVVERQQ.

WD repeat units lie at residues Asn118–Arg158, Gly170–Gly210, Gly220–Cys260, Ala263–His303, Ser307–Ser347, and Gly364–Val404.

It belongs to the WD repeat RBAP46/RBAP48/MSI1 family. Binds directly to helix 1 of the histone fold of histone H4, a region that is not accessible when H4 is in chromatin. Probable component of a NuRD-like complex, composed of at least lin-53 and hda-1. Interacts with lin-35. Interacts with hda-1; the interaction is direct. Component of the DRM complex, at least composed of lin-9, lin-35, lin-37, lin-52, lin-53, lin-54- dpl-1 and efl-1. Interacts with hcp-3.

The protein localises to the nucleus. It localises to the chromosome. The protein resides in the centromere. Functionally, core histone-binding subunit that may target chromatin assembly factors, chromatin remodeling factors and histone deacetylases to their histone substrates in a manner that is regulated by nucleosomal DNA. Required for hcp-3 and his-1 stabilization, localization of hcp-3 to centromeres and for proper chromosome segregation. Synthetic multivulva class B (synMuvB) protein. SynMuvB proteins are required to repress the induction of vulval development by Ras signaling and probably act by forming the multiprotein DRM complex that represses transcription. This Caenorhabditis elegans protein is Probable histone-binding protein lin-53.